A 370-amino-acid polypeptide reads, in one-letter code: MSVRVDIGHRLGDFAVEARFESAGRLTALFGPSGSGKTTLINMIAGLIRPDKGCIEVEGRVLVDTDAGIFVPKHRRRIGMVFQDARLFPHMSVASNLRYGRWFTPAKERYADMDAVIDLLGIGPLLGRRPAKLSGGEKQRVAIGRALLASPGLLLMDEPLASLDEARKAEILPYIERLRDETKIPIVYVSHSVAEVARLASDVVMLAQGKVVASGPTEAVMQRLDLLPAEERGEGGAVLDTKVLRHDEAFGMTVLGSAAGEIRVPRLAMQTGAPVRVRIRARDVMIATEKPTGLSALNILPGTIVAISPGEGPAVEVGIDCNGATVLARITEQSRQALELRLGGNVFAVVKTVSFDRANTGAGLPLEVDG.

The 232-residue stretch at 2–233 folds into the ABC transporter domain; the sequence is SVRVDIGHRL…LDLLPAEERG (232 aa). 31–38 contributes to the ATP binding site; it reads GPSGSGKT. The Mop domain occupies 293 to 359; the sequence is GLSALNILPG…VKTVSFDRAN (67 aa).

This sequence belongs to the ABC transporter superfamily. Molybdate importer (TC 3.A.1.8) family. The complex is composed of two ATP-binding proteins (ModC), two transmembrane proteins (ModB) and a solute-binding protein (ModA).

It localises to the cell inner membrane. It carries out the reaction molybdate(out) + ATP + H2O = molybdate(in) + ADP + phosphate + H(+). Part of the ABC transporter complex ModABC involved in molybdenum import. Responsible for energy coupling to the transport system. In Mesorhizobium japonicum (strain LMG 29417 / CECT 9101 / MAFF 303099) (Mesorhizobium loti (strain MAFF 303099)), this protein is Molybdenum import ATP-binding protein ModC.